A 71-amino-acid polypeptide reads, in one-letter code: Antitoxin VapB26 (71 aa).

In terms of biological role, antitoxin component of a type II toxin-antitoxin (TA) system. Upon expression in M.smegmatis neutralizes the effect of cognate toxin VapC26. This is Antitoxin VapB26 (vapB26) from Mycobacterium tuberculosis (strain ATCC 25618 / H37Rv).